Here is a 390-residue protein sequence, read N- to C-terminus: Homoserine O-acetyltransferase (390 aa).

An AB hydrolase-1 domain is found at 55–366 (NAILINHAFS…ESDCGHDAFL (312 aa)). Residue Ser-163 is the Nucleophile of the active site. Arg-232 is a binding site for substrate. Active-site residues include Asp-329 and His-362. Substrate is bound at residue Asp-363.

This sequence belongs to the AB hydrolase superfamily. MetX family. In terms of assembly, homodimer.

It localises to the cytoplasm. The catalysed reaction is L-homoserine + acetyl-CoA = O-acetyl-L-homoserine + CoA. It participates in amino-acid biosynthesis; L-methionine biosynthesis via de novo pathway; O-acetyl-L-homoserine from L-homoserine: step 1/1. In terms of biological role, transfers an acetyl group from acetyl-CoA to L-homoserine, forming acetyl-L-homoserine. This is Homoserine O-acetyltransferase from Desulfotalea psychrophila (strain LSv54 / DSM 12343).